The chain runs to 495 residues: Probable aspartic-type endopeptidase OPSB (495 aa).

The N-terminal stretch at 1 to 19 (MRGDSFIWSLATAIPLLST) is a signal peptide. The Peptidase A1 domain maps to 73 to 408 (YFCNLTLGTP…DLDNNEISIA (336 aa)). A glycan (N-linked (GlcNAc...) asparagine) is linked at N76. The active site involves D91. N136 is a glycosylation site (N-linked (GlcNAc...) asparagine). D290 is an active-site residue. Residue N413 is glycosylated (N-linked (GlcNAc...) asparagine). Positions 447 to 470 (ATGLPGVETGVPGSRPPSSKAAGQ) are disordered. A467 is lipidated: GPI-anchor amidated alanine. The propeptide at 468–495 (AGQAKRPDFVLGVAAVGLAGAGMLFAAM) is removed in mature form.

It belongs to the peptidase A1 family.

It is found in the cell membrane. Probable GPI-anchored aspartic-type endopeptidase which contributes to virulence. This is Probable aspartic-type endopeptidase OPSB (OPSB) from Arthroderma benhamiae (strain ATCC MYA-4681 / CBS 112371) (Trichophyton mentagrophytes).